A 191-amino-acid polypeptide reads, in one-letter code: MTFATVYIKPHTPRGDWLASLGQYVGLEIKTVDYKSAEASKFEELFPLKRVPALVTPNGFQLTELIAIVEYIVAKGSKPELSGKTTEERATNTRWLSFFNSDFVQAAGGYFMGPNDEIKQQSLQTMLSLLEYIDKHLSQSKYFTNNTILTADIFAFQIFAMAKQFGVDFTHYPNVERFTGEVSQHPIIKNM.

One can recognise a GST N-terminal domain in the interval 2–80 (TFATVYIKPH…YIVAKGSKPE (79 aa)). Positions 85–191 (TTEERATNTR…VSQHPIIKNM (107 aa)) constitute a GST C-terminal domain.

This sequence belongs to the GST superfamily.

The enzyme catalyses RX + glutathione = an S-substituted glutathione + a halide anion + H(+). Functionally, conjugation of reduced glutathione to a wide number of exogenous and endogenous hydrophobic electrophiles. The protein is Glutathione S-transferase Y-2 (GSTY2) of Pichia kudriavzevii (Yeast).